The sequence spans 361 residues: Alanine racemase 2 (361 aa).

The active-site Proton acceptor; specific for D-alanine is Lys-30. Lys-30 bears the N6-(pyridoxal phosphate)lysine mark. Arg-122 is a substrate binding site. Tyr-256 (proton acceptor; specific for L-alanine) is an active-site residue. Met-303 is a binding site for substrate.

This sequence belongs to the alanine racemase family. Requires pyridoxal 5'-phosphate as cofactor.

The enzyme catalyses L-alanine = D-alanine. It functions in the pathway amino-acid biosynthesis; D-alanine biosynthesis; D-alanine from L-alanine: step 1/1. Functionally, catalyzes the interconversion of L-alanine and D-alanine. May also act on other amino acids. The polypeptide is Alanine racemase 2 (alr2) (Staphylococcus aureus (strain COL)).